A 118-amino-acid polypeptide reads, in one-letter code: UPF0342 protein ABC1519 (118 aa).

This sequence belongs to the UPF0342 family.

This Shouchella clausii (strain KSM-K16) (Alkalihalobacillus clausii) protein is UPF0342 protein ABC1519.